We begin with the raw amino-acid sequence, 497 residues long: MAGGIEIAFEPLSSRGRGGDVVVFVGDDLALSGPAAEILGRPGAELVVRAAASERFKGKAQSALVLPAPAGVEADRLVVIGLGSEKDRAKTDWTLLGGFTAGKVGGRSARVVLDWPGYAGSARDVADFTLGARLRSYRFDQYKTKKKDEDEAGAALSLLVADPSGAQAAARDAAAVAEGVILARNLVNEPPNVLYPEEYARRVSELTSLGVEIEILDVARMKELGMGALLAVAQGSAREPRVAIMRWNGADDPSEPPLALIGKGVVFDSGGVSIKSAGGMEDMKGDMGGSAAVVGTLHALAARKAKANVVGAIGIVENMPDGNSYRPSDIVTSLSGQTIEVINTDAEGRLVLADVLWHVQATYKPKAMIDLATLTGAIIVALGQDIAGLFSNDDALSAQITAAGEAAGEKVWRMPLIPAFDKAIDSKFADMKNTGGRHGGAATAAAFLKRYVNDVPWAHLDIAGVGMSSTPSEINRSWGAGWGVRLLDRLVREHYER.

Residues Lys263 and Asp268 each contribute to the Mn(2+) site. Lys275 is an active-site residue. Asp286, Asp345, and Glu347 together coordinate Mn(2+). Arg349 is an active-site residue.

Belongs to the peptidase M17 family. The cofactor is Mn(2+).

The protein resides in the cytoplasm. It carries out the reaction Release of an N-terminal amino acid, Xaa-|-Yaa-, in which Xaa is preferably Leu, but may be other amino acids including Pro although not Arg or Lys, and Yaa may be Pro. Amino acid amides and methyl esters are also readily hydrolyzed, but rates on arylamides are exceedingly low.. It catalyses the reaction Release of an N-terminal amino acid, preferentially leucine, but not glutamic or aspartic acids.. Its function is as follows. Presumably involved in the processing and regular turnover of intracellular proteins. Catalyzes the removal of unsubstituted N-terminal amino acids from various peptides. The protein is Probable cytosol aminopeptidase of Methylorubrum populi (strain ATCC BAA-705 / NCIMB 13946 / BJ001) (Methylobacterium populi).